The primary structure comprises 270 residues: Transcription factor bHLH113 (270 aa).

The tract at residues 109-153 (CTVDKSTKSSTKKRTGTGNGQESDQNRKPGKKGKRNQEKSSVGIA) is disordered. The region spanning 144–193 (NQEKSSVGIAKVRKERLGERIAALQQLVSPYGKTDAASVLHEAMGYIKFL) is the bHLH domain.

In terms of assembly, homodimer.

It localises to the nucleus. In Arabidopsis thaliana (Mouse-ear cress), this protein is Transcription factor bHLH113 (BHLH113).